A 1000-amino-acid chain; its full sequence is Sop-2-related protein 1 (1000 aa).

Disordered stretches follow at residues 355-374 (KIMK…QYQQ), 379-422 (HQQH…GPSE), and 466-509 (APSE…VARG). Low complexity predominate over residues 390 to 404 (SSSSVPSTSSPSCSS). The span at 406–415 (ANRKEMETVR) shows a compositional bias: basic and acidic residues. The segment covering 489-502 (GPSQQQQIPGTSQQ) has biased composition (low complexity). Residues 633 to 720 (REQILPQQYM…LNTSSVQPSE (88 aa)) form an RNA-binding region. Positions 948 to 1000 (HRMHSQRPPSMGNSSTSSEASSTSPTNAATATSSPASNRPTTSTAQPPTLNPT) are disordered. The span at 960–992 (NSSTSSEASSTSPTNAATATSSPASNRPTTSTA) shows a compositional bias: low complexity.

In terms of assembly, binds through its N-terminal region to the N-terminal region of sop-2.

It is found in the nucleus. Acts synergistically with sop-2 to maintain the transcriptionally repressive state of homeotic genes throughout development. Not required to initiate repression, but to maintain it during later stages of development. Also required to repress expression of other genes. Binds RNA in a sequence-independent manner. This chain is Sop-2-related protein 1 (sor-1), found in Caenorhabditis elegans.